The sequence spans 1201 residues: Zinc finger protein sdc-1 (1201 aa).

C2H2-type zinc fingers lie at residues leucine 117 to histidine 139, tyrosine 145 to cysteine 168, serine 233 to histidine 254, tyrosine 268 to histidine 290, isoleucine 486 to histidine 513, tyrosine 521 to cysteine 543, and valine 652 to histidine 674. The disordered stretch occupies residues lysine 1164–arginine 1201. The segment covering asparagine 1167–isoleucine 1176 has biased composition (basic and acidic residues).

As to quaternary structure, component of the SDC complex, which consists of sdc-1, sdc-2 and sdc-3. Within the complex, interacts with sdc-2 and sdc-3.

The protein resides in the nucleus. The protein localises to the chromosome. Its function is as follows. Embryonic transcription factor regulating downstream genes involved specifically in the sex determination and dosage compensation pathways, or regulating other genes involved in the coordinate control of both processes. Component of the SDC complex that functions in sex determination and in X chromosome dosage compensation specifically in hermaphrodite (XX) animals. Involved in the recruitment of the condensin I-like dosage compensation complex to the male sex-determining autosomal gene her-1, thereby contributing to its repression and initiating hermaphrodite sexual development. Similarly, might contribute to X-linked gene repression through recruitment of the dosage compensation complex to the X chromosomes in hermaphrodites. Seems to be involved in the depletion of histone H4 lysine 16 acetylation (H4K16ac) on dosage compensated X chromosomes. Plays a role in developmental rate and body fat regulation downstream of the TOR complex 2 pathway. The protein is Zinc finger protein sdc-1 (sdc-1) of Caenorhabditis elegans.